Reading from the N-terminus, the 100-residue chain is Urease subunit gamma (100 aa).

Belongs to the urease gamma subunit family. Heterotrimer of UreA (gamma), UreB (beta) and UreC (alpha) subunits. Three heterotrimers associate to form the active enzyme.

It localises to the cytoplasm. It catalyses the reaction urea + 2 H2O + H(+) = hydrogencarbonate + 2 NH4(+). It functions in the pathway nitrogen metabolism; urea degradation; CO(2) and NH(3) from urea (urease route): step 1/1. In Halalkalibacterium halodurans (strain ATCC BAA-125 / DSM 18197 / FERM 7344 / JCM 9153 / C-125) (Bacillus halodurans), this protein is Urease subunit gamma.